A 78-amino-acid chain; its full sequence is Large ribosomal subunit protein bL28 (78 aa).

The segment at 1-22 (MSKVCQVTGKRPTTGNNVSHAN) is disordered. Polar residues predominate over residues 11–22 (RPTTGNNVSHAN).

The protein belongs to the bacterial ribosomal protein bL28 family.

In Alkalilimnicola ehrlichii (strain ATCC BAA-1101 / DSM 17681 / MLHE-1), this protein is Large ribosomal subunit protein bL28.